Reading from the N-terminus, the 208-residue chain is 3-demethoxyubiquinol 3-hydroxylase (208 aa).

Positions 57, 87, 90, 139, 171, and 174 each coordinate Fe cation.

It belongs to the COQ7 family. Fe cation serves as cofactor.

It localises to the cell membrane. The enzyme catalyses a 5-methoxy-2-methyl-3-(all-trans-polyprenyl)benzene-1,4-diol + AH2 + O2 = a 3-demethylubiquinol + A + H2O. It functions in the pathway cofactor biosynthesis; ubiquinone biosynthesis. Its function is as follows. Catalyzes the hydroxylation of 2-nonaprenyl-3-methyl-6-methoxy-1,4-benzoquinol during ubiquinone biosynthesis. The protein is 3-demethoxyubiquinol 3-hydroxylase of Burkholderia pseudomallei (strain 1106a).